The chain runs to 317 residues: Olfactory receptor 10AD1 (317 aa).

Over 1 to 25 the chain is Extracellular; the sequence is MLRNGSIVTEFILVGFQQSSTSTRA. The N-linked (GlcNAc...) asparagine glycan is linked to N4. The helical transmembrane segment at 26–46 threads the bilayer; the sequence is LLFALFLALYSLTMAMNGLII. Topologically, residues 47–55 are cytoplasmic; sequence FITSWTDPK. Residues 56–76 form a helical membrane-spanning segment; the sequence is LNSPMYFFLGHLSLLDVCFIT. Residues 77 to 100 lie on the Extracellular side of the membrane; sequence TTIPQMLIHLVVRDHIVSFVCCMT. Cysteines 98 and 190 form a disulfide. The chain crosses the membrane as a helical span at residues 101–121; it reads QMYFVFCVGVAECILLAFMAY. Residues 122-140 are Cytoplasmic-facing; that stretch reads DRYVAICYPLNYVPIISQK. Residues 141–161 traverse the membrane as a helical segment; the sequence is VCVRLVGTAWFFGLINGIFLE. Topologically, residues 162–198 are extracellular; that stretch reads YISFREPFRRDNHIESFFCEAPIVIGLSCGDPQFSLW. Residues 199–218 traverse the membrane as a helical segment; sequence AIFADAIVVILSPMVLTVTS. Residues 219-238 are Cytoplasmic-facing; that stretch reads YVHILATILSKASSSGRGKT. Residues 239-259 traverse the membrane as a helical segment; the sequence is FSTCASHLTVVIFLYTSAMFS. Residues 260–272 lie on the Extracellular side of the membrane; that stretch reads YMNPHSTHGPDKD. A helical membrane pass occupies residues 273-293; sequence KPFSLLYTIITPMCNPIIYSF. Over 294–317 the chain is Cytoplasmic; sequence RNKEIKEAMVRALGRTRLAQPQSV.

This sequence belongs to the G-protein coupled receptor 1 family.

The protein resides in the cell membrane. Odorant receptor. The protein is Olfactory receptor 10AD1 (OR10AD1) of Homo sapiens (Human).